We begin with the raw amino-acid sequence, 1049 residues long: Multiple C2 domain and transmembrane region protein 16 (1049 aa).

The C2 1 domain occupies 1–112 (MATTRKLVVE…VGQGEEALIY (112 aa)). Residues 136 to 249 (DEKPPPLKPT…PPQNQPDGED (114 aa)) form a disordered region. Composition is skewed to basic and acidic residues over residues 153 to 170 (VEEK…ESKP) and 226 to 238 (ESDK…KPVE). C2 domains are found at residues 302 to 426 (TSEI…PQWY), 460 to 582 (TAGN…SRWL), and 617 to 745 (VCSD…RNTY). Residues Ser-338, Asp-390, Thr-393, and Ser-398 each coordinate Ca(2+). Transmembrane regions (helical) follow at residues 883–903 (VMLI…LFVI) and 989–1009 (ATGI…LVPT).

Belongs to the MCTP family. Ca(2+) serves as cofactor. As to expression, expressed in the vascular tissues of roots, cotyledons and rosette leaves. Accumulates in roots meristems and shoot apical meristems (SAMs). Observed in flowers.

It localises to the endoplasmic reticulum membrane. Functionally, may function as a signaling molecule by regulating the trafficking of other regulators. The sequence is that of Multiple C2 domain and transmembrane region protein 16 from Arabidopsis thaliana (Mouse-ear cress).